A 216-amino-acid chain; its full sequence is Acyl-homoserine-lactone synthase (216 aa).

Belongs to the autoinducer synthase family.

The catalysed reaction is a fatty acyl-[ACP] + S-adenosyl-L-methionine = an N-acyl-L-homoserine lactone + S-methyl-5'-thioadenosine + holo-[ACP] + H(+). Functionally, required for the synthesis of an acyl-HSL autoinducer that binds to YukR and which is involved in the regulation of motility and morphology. The protein is Acyl-homoserine-lactone synthase (yukI) of Yersinia ruckeri.